The sequence spans 523 residues: Bifunctional purine biosynthesis protein PurH (523 aa).

Positions 4–152 (DHIRRPIRRA…KNHPSVAVVT (149 aa)) constitute an MGS-like domain.

It belongs to the PurH family.

The catalysed reaction is (6R)-10-formyltetrahydrofolate + 5-amino-1-(5-phospho-beta-D-ribosyl)imidazole-4-carboxamide = 5-formamido-1-(5-phospho-D-ribosyl)imidazole-4-carboxamide + (6S)-5,6,7,8-tetrahydrofolate. It catalyses the reaction IMP + H2O = 5-formamido-1-(5-phospho-D-ribosyl)imidazole-4-carboxamide. The protein operates within purine metabolism; IMP biosynthesis via de novo pathway; 5-formamido-1-(5-phospho-D-ribosyl)imidazole-4-carboxamide from 5-amino-1-(5-phospho-D-ribosyl)imidazole-4-carboxamide (10-formyl THF route): step 1/1. It functions in the pathway purine metabolism; IMP biosynthesis via de novo pathway; IMP from 5-formamido-1-(5-phospho-D-ribosyl)imidazole-4-carboxamide: step 1/1. This Mycobacterium ulcerans (strain Agy99) protein is Bifunctional purine biosynthesis protein PurH.